We begin with the raw amino-acid sequence, 117 residues long: MASSAVIKLACAVLLCIVVAAPYAEAGITCGMVSSKLAPCIGYLKGGPLGGGCCGGIKALNAAAATTPDRKTACNCLKSAANAIKGINYGKAAGLPGMCGVHIPYAISPSTNCNAVH.

The N-terminal stretch at 1–26 (MASSAVIKLACAVLLCIVVAAPYAEA) is a signal peptide. 4 disulfide bridges follow: Cys-30–Cys-76, Cys-40–Cys-53, Cys-54–Cys-99, and Cys-74–Cys-113.

This sequence belongs to the plant LTP family.

Its function is as follows. Plant non-specific lipid-transfer proteins transfer phospholipids as well as galactolipids across membranes. May play a role in wax or cutin deposition in the cell walls of expanding epidermal cells and certain secretory tissues. The polypeptide is Non-specific lipid-transfer protein (Spinacia oleracea (Spinach)).